A 212-amino-acid chain; its full sequence is Thymidylate kinase (212 aa).

10–17 (GLEGAGKS) serves as a coordination point for ATP.

Belongs to the thymidylate kinase family.

It catalyses the reaction dTMP + ATP = dTDP + ADP. Functionally, phosphorylation of dTMP to form dTDP in both de novo and salvage pathways of dTTP synthesis. The chain is Thymidylate kinase from Vibrio cholerae serotype O1 (strain ATCC 39541 / Classical Ogawa 395 / O395).